We begin with the raw amino-acid sequence, 442 residues long: MSNTKQAPKVGFVSLGCPKNLVDSERILTQLRTEGYDVVPSYDDAELVVVNTCGFIDSAVQESLEAIGEALAENGKVIVTGCLGAKENQIREIHPKVLEITGPHAYEEVLGHVHKYVAKPTHNPFTSLVPAHGVKLTPRHYAYLKISEGCNHRCTFCIIPSMRGDLVSRPIGEVLAEAKRLKEAGVKEILVISQDTSAYGVDVKHRTGFYDGMPVKTSMVALCEELAKLDIWVRLHYVYPYPHVDDVIPLMRDGKVLPYLDIPLQHASPRILKLMKRPGTVERTLERIQKWREICPEITLRSTFIVGFPGETEEEFQMLLDFIDKAELDRVGCFKYSPVEGAKANELPDPVPEDVQEERFQRFMELQQQVSIRKLARKVGKEMTVLIDEVDEEGATGRSFADAPEIDGLVYLNGETDLKPGDLVKVRIDEADEYDLWASLIG.

In terms of domain architecture, MTTase N-terminal spans 8–118 (PKVGFVSLGC…VLGHVHKYVA (111 aa)). Positions 17, 53, 82, 150, 154, and 157 each coordinate [4Fe-4S] cluster. Residues 136–373 (LTPRHYAYLK…MELQQQVSIR (238 aa)) enclose the Radical SAM core domain. The TRAM domain occupies 376-442 (ARKVGKEMTV…EYDLWASLIG (67 aa)).

It belongs to the methylthiotransferase family. RimO subfamily. The cofactor is [4Fe-4S] cluster.

The protein localises to the cytoplasm. The enzyme catalyses L-aspartate(89)-[ribosomal protein uS12]-hydrogen + (sulfur carrier)-SH + AH2 + 2 S-adenosyl-L-methionine = 3-methylsulfanyl-L-aspartate(89)-[ribosomal protein uS12]-hydrogen + (sulfur carrier)-H + 5'-deoxyadenosine + L-methionine + A + S-adenosyl-L-homocysteine + 2 H(+). In terms of biological role, catalyzes the methylthiolation of an aspartic acid residue of ribosomal protein uS12. The sequence is that of Ribosomal protein uS12 methylthiotransferase RimO from Aeromonas salmonicida (strain A449).